Here is a 175-residue protein sequence, read N- to C-terminus: ATP-dependent protease subunit HslV (175 aa).

The active site involves T2. Na(+) contacts are provided by A156, C159, and T162.

It belongs to the peptidase T1B family. HslV subfamily. In terms of assembly, a double ring-shaped homohexamer of HslV is capped on each side by a ring-shaped HslU homohexamer. The assembly of the HslU/HslV complex is dependent on binding of ATP.

It is found in the cytoplasm. The enzyme catalyses ATP-dependent cleavage of peptide bonds with broad specificity.. Its activity is regulated as follows. Allosterically activated by HslU binding. Functionally, protease subunit of a proteasome-like degradation complex believed to be a general protein degrading machinery. This is ATP-dependent protease subunit HslV from Rhizobium etli (strain CIAT 652).